The sequence spans 737 residues: Polyribonucleotide nucleotidyltransferase (737 aa).

Mg(2+)-binding residues include aspartate 489 and aspartate 495. The 60-residue stretch at 556-615 (PKIDTIKIDVDKIKIVIGKGGETIDKIIAETGVKIDIDEEGNVSIYSSDQDAINRAKEII) folds into the KH domain. One can recognise an S1 motif domain in the interval 625–693 (DEVYRAKVVR…EKGRIDASMK (69 aa)). The disordered stretch occupies residues 691–737 (SMKALLPRPPKPEHDEKGEKSERPHRPRHHKDHKPKKEFTETPKDSE). Basic and acidic residues predominate over residues 700 to 714 (PKPEHDEKGEKSERP). A compositionally biased stretch (basic residues) spans 715–724 (HRPRHHKDHK). Residues 725-737 (PKKEFTETPKDSE) are compositionally biased toward basic and acidic residues.

The protein belongs to the polyribonucleotide nucleotidyltransferase family. The cofactor is Mg(2+).

It is found in the cytoplasm. The catalysed reaction is RNA(n+1) + phosphate = RNA(n) + a ribonucleoside 5'-diphosphate. In terms of biological role, involved in mRNA degradation. Catalyzes the phosphorolysis of single-stranded polyribonucleotides processively in the 3'- to 5'-direction. The protein is Polyribonucleotide nucleotidyltransferase of Streptococcus pneumoniae (strain 70585).